The primary structure comprises 180 residues: MKLDKYTVGRRYGKALFELAIDSNSAEEIYQELLSLRQIYSEIPGLGNVLSDVRLEPHEKRIIMDKLVSGFDGIVKNFLEVVYSYNRMSELSFMIDEYEHRYNDYKGLLLGSVKTAVPLSDEQLQKLEMNVAKTMDYQTVELKQIVDSSIIGGAIVEANHRVIDGSIRTQLEKMRNQLNR.

This sequence belongs to the ATPase delta chain family. In terms of assembly, F-type ATPases have 2 components, F(1) - the catalytic core - and F(0) - the membrane proton channel. F(1) has five subunits: alpha(3), beta(3), gamma(1), delta(1), epsilon(1). F(0) has three main subunits: a(1), b(2) and c(10-14). The alpha and beta chains form an alternating ring which encloses part of the gamma chain. F(1) is attached to F(0) by a central stalk formed by the gamma and epsilon chains, while a peripheral stalk is formed by the delta and b chains.

It is found in the cell membrane. Its function is as follows. F(1)F(0) ATP synthase produces ATP from ADP in the presence of a proton or sodium gradient. F-type ATPases consist of two structural domains, F(1) containing the extramembraneous catalytic core and F(0) containing the membrane proton channel, linked together by a central stalk and a peripheral stalk. During catalysis, ATP synthesis in the catalytic domain of F(1) is coupled via a rotary mechanism of the central stalk subunits to proton translocation. This protein is part of the stalk that links CF(0) to CF(1). It either transmits conformational changes from CF(0) to CF(1) or is implicated in proton conduction. The chain is ATP synthase subunit delta from Enterococcus hirae (strain ATCC 9790 / DSM 20160 / JCM 8729 / LMG 6399 / NBRC 3181 / NCIMB 6459 / NCDO 1258 / NCTC 12367 / WDCM 00089 / R).